A 633-amino-acid polypeptide reads, in one-letter code: Chaperone protein HtpG (633 aa).

Residues Met1–Arg341 form an a; substrate-binding region. Residues Glu342–Arg562 form a b region. The interval Leu563–Ala633 is c.

This sequence belongs to the heat shock protein 90 family. As to quaternary structure, homodimer.

Its subcellular location is the cytoplasm. Molecular chaperone. Has ATPase activity. The polypeptide is Chaperone protein HtpG (Cupriavidus necator (strain ATCC 17699 / DSM 428 / KCTC 22496 / NCIMB 10442 / H16 / Stanier 337) (Ralstonia eutropha)).